Reading from the N-terminus, the 59-residue chain is Large ribosomal subunit protein eL29 (59 aa).

Residues Met1–Thr26 are compositionally biased toward basic residues. Residues Met1–Pro37 form a disordered region. A Glycyl lysine isopeptide (Lys-Gly) (interchain with G-Cter in ubiquitin) cross-link involves residue Lys52.

The protein belongs to the eukaryotic ribosomal protein eL29 family. In terms of assembly, component of the large ribosomal subunit (LSU). Mature yeast ribosomes consist of a small (40S) and a large (60S) subunit. The 40S small subunit contains 1 molecule of ribosomal RNA (18S rRNA) and 33 different proteins (encoded by 57 genes). The large 60S subunit contains 3 rRNA molecules (25S, 5.8S and 5S rRNA) and 46 different proteins (encoded by 81 genes).

Its subcellular location is the cytoplasm. Component of the ribosome, a large ribonucleoprotein complex responsible for the synthesis of proteins in the cell. The small ribosomal subunit (SSU) binds messenger RNAs (mRNAs) and translates the encoded message by selecting cognate aminoacyl-transfer RNA (tRNA) molecules. The large subunit (LSU) contains the ribosomal catalytic site termed the peptidyl transferase center (PTC), which catalyzes the formation of peptide bonds, thereby polymerizing the amino acids delivered by tRNAs into a polypeptide chain. The nascent polypeptides leave the ribosome through a tunnel in the LSU and interact with protein factors that function in enzymatic processing, targeting, and the membrane insertion of nascent chains at the exit of the ribosomal tunnel. This is Large ribosomal subunit protein eL29 from Saccharomyces cerevisiae (strain ATCC 204508 / S288c) (Baker's yeast).